The sequence spans 620 residues: 1-deoxy-D-xylulose-5-phosphate synthase (620 aa).

Thiamine diphosphate is bound by residues H80 and G121 to S123. D152 is a Mg(2+) binding site. Thiamine diphosphate is bound by residues G153–A154, N181, Y288, and E370. N181 contributes to the Mg(2+) binding site.

Belongs to the transketolase family. DXPS subfamily. Homodimer. Mg(2+) serves as cofactor. Thiamine diphosphate is required as a cofactor.

The enzyme catalyses D-glyceraldehyde 3-phosphate + pyruvate + H(+) = 1-deoxy-D-xylulose 5-phosphate + CO2. Its pathway is metabolic intermediate biosynthesis; 1-deoxy-D-xylulose 5-phosphate biosynthesis; 1-deoxy-D-xylulose 5-phosphate from D-glyceraldehyde 3-phosphate and pyruvate: step 1/1. Its function is as follows. Catalyzes the acyloin condensation reaction between C atoms 2 and 3 of pyruvate and glyceraldehyde 3-phosphate to yield 1-deoxy-D-xylulose-5-phosphate (DXP). The chain is 1-deoxy-D-xylulose-5-phosphate synthase from Salmonella heidelberg (strain SL476).